Consider the following 442-residue polypeptide: Trigger factor (442 aa).

Residues 163–248 (NDLVTINYCI…ILNVEEKQEN (86 aa)) enclose the PPIase FKBP-type domain.

This sequence belongs to the FKBP-type PPIase family. Tig subfamily.

It is found in the cytoplasm. The catalysed reaction is [protein]-peptidylproline (omega=180) = [protein]-peptidylproline (omega=0). Involved in protein export. Acts as a chaperone by maintaining the newly synthesized protein in an open conformation. Functions as a peptidyl-prolyl cis-trans isomerase. The protein is Trigger factor of Buchnera aphidicola subsp. Schizaphis graminum (strain Sg).